A 279-amino-acid chain; its full sequence is Protease HtpX homolog (279 aa).

The next 2 helical transmembrane spans lie at 4–24 and 34–54; these read IFLF…VLAV and GSLL…SLLM. Histidine 140 contributes to the Zn(2+) binding site. The active site involves glutamate 141. Histidine 144 contributes to the Zn(2+) binding site. 2 helical membrane passes run 155 to 175 and 189 to 209; these read LIQG…ANLI and FLVS…IVMW. Glutamate 215 provides a ligand contact to Zn(2+).

This sequence belongs to the peptidase M48B family. Requires Zn(2+) as cofactor.

The protein localises to the cell inner membrane. The polypeptide is Protease HtpX homolog (Neisseria gonorrhoeae (strain ATCC 700825 / FA 1090)).